Here is a 507-residue protein sequence, read N- to C-terminus: Bifunctional purine biosynthesis protein PurH (507 aa).

In terms of domain architecture, MGS-like spans 1–149 (MSESKRIKTA…KNYNDVIIVA (149 aa)).

Belongs to the PurH family.

It carries out the reaction (6R)-10-formyltetrahydrofolate + 5-amino-1-(5-phospho-beta-D-ribosyl)imidazole-4-carboxamide = 5-formamido-1-(5-phospho-D-ribosyl)imidazole-4-carboxamide + (6S)-5,6,7,8-tetrahydrofolate. It catalyses the reaction IMP + H2O = 5-formamido-1-(5-phospho-D-ribosyl)imidazole-4-carboxamide. The protein operates within purine metabolism; IMP biosynthesis via de novo pathway; 5-formamido-1-(5-phospho-D-ribosyl)imidazole-4-carboxamide from 5-amino-1-(5-phospho-D-ribosyl)imidazole-4-carboxamide (10-formyl THF route): step 1/1. Its pathway is purine metabolism; IMP biosynthesis via de novo pathway; IMP from 5-formamido-1-(5-phospho-D-ribosyl)imidazole-4-carboxamide: step 1/1. The polypeptide is Bifunctional purine biosynthesis protein PurH (Bacteroides thetaiotaomicron (strain ATCC 29148 / DSM 2079 / JCM 5827 / CCUG 10774 / NCTC 10582 / VPI-5482 / E50)).